We begin with the raw amino-acid sequence, 302 residues long: Vomeronasal type-1 receptor 48 (302 aa).

Residues 1 to 16 are Extracellular-facing; it reads MNENSRLHTHSNIRNT. Residues 17–37 traverse the membrane as a helical segment; it reads FFSEIGIGISGNSFLLLFHII. The Cytoplasmic portion of the chain corresponds to 38–49; the sequence is KFFRGHRPRLTD. Residues 50-70 form a helical membrane-spanning segment; sequence LPIGLLSLIHLLMLLVAAVIA. The Extracellular segment spans residues 71 to 91; that stretch reads TDIFISWRGWNDIICKFLVYL. A disulfide bond links cysteine 85 and cysteine 172. A helical membrane pass occupies residues 92–114; the sequence is YRSLRGLSLCTTSMLSVLQAIIL. The Cytoplasmic portion of the chain corresponds to 115 to 131; that stretch reads SPRSYCLAKFKRKSSHN. The helical transmembrane segment at 132–152 threads the bilayer; the sequence is ISCAIIFLSVLYMSISSHLLI. At 153 to 193 the chain is on the extracellular side; sequence SITATPNLTMNDFLYVSQSCSLLPLSYLMQSIYSTLLVLRE. N-linked (GlcNAc...) asparagine glycosylation is present at asparagine 159. A helical membrane pass occupies residues 194-214; that stretch reads VFLIGLMVLSTSYMVALLYMH. The Cytoplasmic segment spans residues 215-238; the sequence is RKQAQNLQGTSLSLKASAEQRATQ. A helical transmembrane segment spans residues 239 to 259; that stretch reads TILMLMTFFVLMSIFDSIVSC. At 260 to 269 the chain is on the extracellular side; the sequence is SRTMFLDDPT. The chain crosses the membrane as a helical span at residues 270–290; sequence SYSIHIFVMHIYATVSPFVFI. Residues 291–302 lie on the Cytoplasmic side of the membrane; that stretch reads STEKHIVNILRG.

Belongs to the G-protein coupled receptor 1 family.

The protein localises to the cell membrane. In terms of biological role, putative pheromone receptor implicated in the regulation of social and reproductive behavior. This chain is Vomeronasal type-1 receptor 48 (Vmn1r48), found in Mus musculus (Mouse).